The chain runs to 225 residues: Thymidylate kinase (225 aa).

Residue G9–T16 participates in ATP binding.

Belongs to the thymidylate kinase family.

The catalysed reaction is dTMP + ATP = dTDP + ADP. Phosphorylation of dTMP to form dTDP in both de novo and salvage pathways of dTTP synthesis. This is Thymidylate kinase from Geobacter sp. (strain M21).